Reading from the N-terminus, the 118-residue chain is Large ribosomal subunit protein bL19 (118 aa).

It belongs to the bacterial ribosomal protein bL19 family.

Functionally, this protein is located at the 30S-50S ribosomal subunit interface and may play a role in the structure and function of the aminoacyl-tRNA binding site. The chain is Large ribosomal subunit protein bL19 from Hahella chejuensis (strain KCTC 2396).